The following is a 35-amino-acid chain: U1-segestritoxin-Sf1a (35 aa).

2 cysteine pairs are disulfide-bonded: Cys10–Cys22 and Cys17–Cys28. The segment at 31–33 is keys region for toxin activity; it reads DPW.

The protein belongs to the neurotoxin 16 (SFI) family. In terms of tissue distribution, expressed by the venom gland.

It is found in the secreted. In terms of biological role, insecticidal toxin. The chain is U1-segestritoxin-Sf1a from Segestria florentina (Tube-web spider).